The chain runs to 105 residues: DNA-directed RNA polymerase subunit omega (105 aa).

The protein belongs to the RNA polymerase subunit omega family. In terms of assembly, the RNAP catalytic core consists of 2 alpha, 1 beta, 1 beta' and 1 omega subunit. When a sigma factor is associated with the core the holoenzyme is formed, which can initiate transcription.

It catalyses the reaction RNA(n) + a ribonucleoside 5'-triphosphate = RNA(n+1) + diphosphate. In terms of biological role, promotes RNA polymerase assembly. Latches the N- and C-terminal regions of the beta' subunit thereby facilitating its interaction with the beta and alpha subunits. This chain is DNA-directed RNA polymerase subunit omega, found in Streptococcus pyogenes serotype M12 (strain MGAS2096).